The following is a 3434-amino-acid chain: MSKKPGGPGKPRVVNMLKRGIPRVFPLVGVKRVVMNLLDGRGPIRFVLALLAFFRFTALAPTKALMRRWKSVNKTTAMKHLTSFKKELGTLIDVVNKRGKKQKKRGGSETSVLMLIFMLIGFAAALKLSTFQGKIMMTVNATDIADVIAIPTPKGPNQCWIRAIDIGFMCDDTITYECPKLESGNDPEDIDCWCDKQAVYVNYGRCTRARHSKRSRRSITVQTHGESTLVNKKDAWLDSTKATRYLTKTENWIIRNPGYALVAVVLGWMLGSNTGQKVIFTVLLLLVAPAYSFNCLGMSSRDFIEGASGATWVDLVLEGDSCITIMAADKPTLDIRMMNIEATNLALVRNYCYAATVSDVSTVSNCPTTGESHNTKRADHNYLCKRGVTDRGWGNGCGLFGKGSIDTCAKFTCSNSAAGRLILPEDIKYEVGVFVHGSTDSTSHGNYSTQIGANQAVRFTISPNAPAITAKMGDYGEVTVECEPRSGLNTEAYYVMTIGTKHFLVHREWFNDLLLPWTSPASTEWRNREILVEFEEPHATKQSVVALGSQEGALHQALAGAIPVEFSSSTLKLTSGHLKCRVKMEKLKLKGTTYGMCTEKFTFSKNPADTGHGTVVLELQYTGSDGPCKIPISSVASLNDMTPVGRMVTANPYVASSTANAKVLVEIEPPFGDSYIVVGRGDKQINHHWHKEGSSIGKAFSTTLKGAQRLAALGDTAWDFGSVGGVFNSIGKAVHQVFGGAFRTLFGGMSWISPGLLGALLLWMGVNARDKSIALAFLATGGVLLFLATNVHADTGCAIDITRRELKCGSGIFIHNDVEAWIDRYKYLPETPKQLAKVVENAHKSGICGIRSVNRFEHQMWESVRDELNALLKENAIDLSVVVEKQKGMYRAAPNRLRLTVEELDIGWKAWGKSLLFAAELANSTFVVDGPETAECPNSKRAWNSFEIEDFGFGITSTRGWLKLREENTSECDSTIIGTAVKGNHAVHSDLSYWIESGLNGTWKLERAIFGEVKSCTWPETHTLWGDAVEETELIIPVTLAGPRSKHNRREGYKVQVQGPWDEEDIKLDFDYCPGTTVTVSEHCGKRGPSVRTTTDSGKLVTDWCCRSCTLPPLRFTTASGCWYGMEIRPMKHDESTLVKSRVQAFNGDMIDPFQLGLLVMFLATQEVLRKRWTARLTLPAAVGALLVLLLGGITYTDLVRYLILVGSAFAESNNGGDVIHLALIAVFKVQPAFLVASLTRSRWTNQENLVLVLGAAFFQMAASDLELTIPGLLNSAATAWMVLRAMAFPSTSAIAMPMLAMLAPGMRMLHLDTYRIVLLLIGICSLLNERRRSVEKKKGAVLIGLALTSTGYFSPTIMAAGLMICNPNKKRGWPATEVLTAVGLMFAIVGGLAELDIDSMSVPFTIAGLMLVSYVISGKATDMWLERAADVSWEAGAAITGTSERLDVQLDDDGDFHLLNDPGVPWKIWVLRMTCLSVAAITPRAILPSAFGYWLTLKYTKRGGVFWDTPSPKVYPKGDTTPGVYRIMARGILGRYQAGVGVMHEGVFHTLWHTTRGAAIMSGEGRLTPYWGNVKEDRVTYGGPWKLDQKWNGVDDVQMIVVEPGKPAINVQTKPGIFKTAHGEIGAVSLDYPIGTSGSPIVNSNGEIIGLYGNGVILGNGAYVSAIVQGERVEEPVPEAYNPEMLKKRQLTVLDLHPGAGKTRRILPQIIKDAIQKRLRTAVLAPTRVVAAEMAEALRGLPVRYLTPAVQREHSGNEIVDVMCHATLTHRLMSPLRVPNYNLFVMDEAHFTDPASIAARGYIATRVEAGEAAAIFMTATPPGTSDPFPDTNSPVHDVSSEIPDRAWSSGFEWITDYAGKTVWFVASVKMSNEIAQCLQRAGKRVIQLNRKSYDTEYPKCKNGDWDFVITTDISEMGANFGASRVIDCRKSVKPTILDEGEGRVILSVPSAITSASAAQRRGRVGRNPSQIGDEYHYGGGTSEDDTMLAHWTEAKILLDNIHLPNGLVAQLYGPERDKTYTMDGEYRLRGEERKTFLELIKTADLPVWLAYKVASNGIQYNDRKWCFDGPRSNIILEDNNEVEIITRIGERKVLKPRWLDARVYSDHQSLKWFKDFAAGKRSAIGFFEVLGRMPEHFAGKTREALDTMYLVATSEKGGKAHRMALEELPDALETITLIAALGVMTAGFFLLMMQRKGIGKLGLGALVLVVATFFLWMSDVSGTKIAGVLLLALLMMVVLIPEPEKQRSQTDNQLAVFLICVLLVVGLVAANEYGMLERTKTDIRNLFGKSLIEENEVHIPPFDFFTLDLKPATAWALYGGSTVVLTPLIKHLVTSQYVTTSLASINAQAGSLFTLPKGIPFTDFDLSVALVFLGCWGQVTLTTLIMATILVTLHYGYLLPGWQAEALRAAQKRTAAGIMKNAVVDGIVATDVPELERTTPQMQKRLGQILLVLASVAAVCVNPRITTIREAGILCTAAALTLWDNNASAAWNSTTATGLCHVMRGSWIAGASIAWTLIKNAEKPAFKRGRAGGRTLGEQWKEKLNAMGKEEFFSYRKEAILEVDRTEARRARREGNKVGGHPVSRGTAKLRWLVERRFVQPIGKVVDLGCGRGGWSYYAATMKNVQEVRGYTKGGPGHEEPMLMQSYGWNIVTMKSGVDVFYKPSEISDTLLCDIGESSPSAEIEEQRTLRILEMVSDWLSRGPKEFCIKILCPYMPKVIEKLESLQRRFGGGLVRVPLSRNSNHEMYWVSGASGNIVHAVNMTSQVLIGRMDKKIWKGPKYEEDVNLGSGTRAVGKGVQHTDYKRIKSRIEKLKEEYAATWHTDDNHPYRTWTYHGSYEVKPSGSASTLVNGVVRLLSKPWDAITGVTTMAMTDTTPFGQQRVFKEKVDTKAPEPPQGVKTVMDETTNWLWAYLARNKKARLCTREEFVKKVNSHAALGAMFEEQNQWKNAREAVEDPKFWEMVDEERECHLRGECRTCIYNMMGKREKKPGEFGKAKGSRAIWFMWLGARFLEFEALGFLNEDHWMSRENSGGGVEGAGIQKLGYILRDVAQKPGGKIYADDTAGWDTRITQADLENEAKVLELMEGEQRTLARAIIELTYRHKVVKVMRPAAGGKTVMDVISREDQRGSGQVVTYALNTFTNIAVQLVRLMEAEAVIGPDDIESIERKKKFAVRTWLFENAEERVQRMAVSGDDCVVKPLDDRFSTALHFLNAMSKVRKDIQEWKPSQGWYDWQQVPFCSNHFQEVIMKDGRTLVVPCRGQDELIGRARISPGSGWNVRDTACLAKAYAQMWLVLYFHRRDLRLMANAICSSVPVDWVPTGRTTWSIHGKGEWMTTEDMLSVWNRVWILENEWMEDKTTVSDWTEVPYVGKREDIWCGSLIGTRTRATWAENIYAAINQVRSVIGKEKYVDYVQSLRRYEETHVSEDRVL.

Positions 2–15 (SKKPGGPGKPRVVN) are interaction with host EXOC1. Residues 2 to 110 (SKKPGGPGKP…KQKKRGGSET (109 aa)) lie on the Cytoplasmic side of the membrane. Positions 37 to 72 (LLDGRGPIRFVLALLAFFRFTALAPTKALMRRWKSV) are hydrophobic; homodimerization of capsid protein C. Positions 106–125 (GGSETSVLMLIFMLIGFAAA) are cleaved as a propeptide — ER anchor for the capsid protein C, removed in mature form by serine protease NS3. Residues 111-131 (SVLMLIFMLIGFAAALKLSTF) traverse the membrane as a helical segment. Residues 132–251 (QGKIMMTVNA…ATRYLTKTEN (120 aa)) are Extracellular-facing. N140 carries an N-linked (GlcNAc...) asparagine; by host glycan. Residues 252–272 (WIIRNPGYALVAVVLGWMLGS) form a helical membrane-spanning segment. The Cytoplasmic segment spans residues 273–277 (NTGQK). The chain crosses the membrane as a helical span at residues 278–292 (VIFTVLLLLVAPAYS). Residues 293 to 745 (FNCLGMSSRD…QVFGGAFRTL (453 aa)) are Extracellular-facing. 6 disulfide bridges follow: C295/C322, C352/C408, C352/C413, C366/C397, C384/C408, and C384/C413. The fusion peptide stretch occupies residues 390-403 (DRGWGNGCGLFGKG). N-linked (GlcNAc...) asparagine; by host glycosylation is present at N446. 2 disulfides stabilise this stretch: C482–C580 and C597–C628. Residues 746–766 (FGGMSWISPGLLGALLLWMGV) traverse the membrane as a helical segment. At 767–772 (NARDKS) the chain is on the cytoplasmic side. The helical transmembrane segment at 773-793 (IALAFLATGGVLLFLATNVHA) threads the bilayer. Over 794-1218 (DTGCAIDITR…AFAESNNGGD (425 aa)) the chain is Extracellular. 2 cysteine pairs are disulfide-bonded: C797-C808 and C848-C936. 2 N-linked (GlcNAc...) asparagine; by host glycosylation sites follow: N923 and N968. Cystine bridges form between C972-C1016, C1073-C1122, C1084-C1105, and C1106-C1109. N1000 carries an N-linked (GlcNAc...) (high mannose) asparagine; by host glycan. Residues 1219–1239 (VIHLALIAVFKVQPAFLVASL) traverse the membrane as a helical segment. The Cytoplasmic portion of the chain corresponds to 1240–1249 (TRSRWTNQEN). Residues 1250–1270 (LVLVLGAAFFQMAASDLELTI) traverse the membrane as a helical segment. Topologically, residues 1271-1286 (PGLLNSAATAWMVLRA) are lumenal. Residues 1287–1307 (MAFPSTSAIAMPMLAMLAPGM) form a helical membrane-spanning segment. Position 1308 (R1308) is a topological domain, cytoplasmic. The chain crosses the membrane as a helical span at residues 1309–1329 (MLHLDTYRIVLLLIGICSLLN). Topologically, residues 1330 to 1340 (ERRRSVEKKKG) are lumenal. A helical transmembrane segment spans residues 1341–1361 (AVLIGLALTSTGYFSPTIMAA). Topologically, residues 1362 to 1373 (GLMICNPNKKRG) are cytoplasmic. Residues 1374-1394 (WPATEVLTAVGLMFAIVGGLA) form a helical membrane-spanning segment. Over 1395–1397 (ELD) the chain is Lumenal. A helical membrane pass occupies residues 1398-1418 (IDSMSVPFTIAGLMLVSYVIS). Residues 1419–1475 (GKATDMWLERAADVSWEAGAAITGTSERLDVQLDDDGDFHLLNDPGVPWKIWVLRMT) are Cytoplasmic-facing. Positions 1426-1465 (LERAADVSWEAGAAITGTSERLDVQLDDDGDFHLLNDPGV) are interacts with and activates NS3 protease. Positions 1476 to 1496 (CLSVAAITPRAILPSAFGYWL) form an intramembrane region, helical. At 1497–2172 (TLKYTKRGGV…RMALEELPDA (676 aa)) the chain is on the cytoplasmic side. The Peptidase S7 domain occupies 1504–1681 (GGVFWDTPSP…ERVEEPVPEA (178 aa)). Active-site charge relay system; for serine protease NS3 activity residues include H1554, D1578, and S1638. The 157-residue stretch at 1684–1840 (PEMLKKRQLT…DTNSPVHDVS (157 aa)) folds into the Helicase ATP-binding domain. An important for RNA-binding region spans residues 1688 to 1691 (KKRQ). Position 1697–1704 (1697–1704 (LHPGAGKT)) interacts with ATP. Residues 1788 to 1791 (DEAH) carry the DEAH box motif. The Helicase C-terminal domain maps to 1851–2016 (GFEWITDYAG…GLVAQLYGPE (166 aa)). At K1892 the chain carries N6-acetyllysine; by host. The interval 1958–1979 (AAQRRGRVGRNPSQIGDEYHYG) is disordered. Residues 2167-2171 (EELPD) are regulates the ATPase activity of NS3 helicase. A helical membrane pass occupies residues 2173–2193 (LETITLIAALGVMTAGFFLLM). Topologically, residues 2194 to 2197 (MQRK) are lumenal. Positions 2198-2218 (GIGKLGLGALVLVVATFFLWM) form an intramembrane region, helical. The Lumenal segment spans residues 2219–2220 (SD). Residues 2221-2241 (VSGTKIAGVLLLALLMMVVLI) form a helical membrane-spanning segment. The Cytoplasmic portion of the chain corresponds to 2242–2256 (PEPEKQRSQTDNQLA). A helical membrane pass occupies residues 2257–2271 (VFLICVLLVVGLVAA). The Lumenal portion of the chain corresponds to 2272–2309 (NEYGMLERTKTDIRNLFGKSLIEENEVHIPPFDFFTLD). An intramembrane region (helical) is located at residues 2310 to 2330 (LKPATAWALYGGSTVVLTPLI). The Lumenal portion of the chain corresponds to 2331 to 2366 (KHLVTSQYVTTSLASINAQAGSLFTLPKGIPFTDFD). Residues 2367–2394 (LSVALVFLGCWGQVTLTTLIMATILVTL) traverse the membrane as a helical segment. Topologically, residues 2395 to 2446 (HYGYLLPGWQAEALRAAQKRTAAGIMKNAVVDGIVATDVPELERTTPQMQKR) are cytoplasmic. The chain crosses the membrane as a helical span at residues 2447 to 2467 (LGQILLVLASVAAVCVNPRIT). Over 2468–2498 (TIREAGILCTAAALTLWDNNASAAWNSTTAT) the chain is Lumenal. A helical membrane pass occupies residues 2499–2519 (GLCHVMRGSWIAGASIAWTLI). Residues 2520–3434 (KNAEKPAFKR…ETHVSEDRVL (915 aa)) are Cytoplasmic-facing. The region spanning 2530–2795 (GRAGGRTLGE…DVNLGSGTRA (266 aa)) is the mRNA cap 0-1 NS5-type MT domain. S2585 contacts S-adenosyl-L-methionine. Residue S2585 is modified to Phosphoserine. K2590 acts as the For 2'-O-MTase activity in catalysis. Residues G2615, W2616, T2633, K2634, D2660, and V2661 each coordinate S-adenosyl-L-methionine. Residue D2675 is the For 2'-O-MTase activity of the active site. I2676 contacts S-adenosyl-L-methionine. Residues K2711 and E2747 each act as for 2'-O-MTase activity in the active site. Residue Y2749 participates in S-adenosyl-L-methionine binding. Zn(2+) is bound by residues E2969, H2973, C2978, and C2981. The RdRp catalytic domain maps to 3059 to 3211 (GKIYADDTAG…KPLDDRFSTA (153 aa)). Residues H3246, C3262, and C3381 each contribute to the Zn(2+) site.

In the N-terminal section; belongs to the class I-like SAM-binding methyltransferase superfamily. mRNA cap 0-1 NS5-type methyltransferase family. In terms of assembly, homodimer. Interacts (via N-terminus) with host EXOC1 (via C-terminus); this interaction results in EXOC1 degradation through the proteasome degradation pathway. As to quaternary structure, forms heterodimers with envelope protein E in the endoplasmic reticulum and Golgi. Homodimer; in the endoplasmic reticulum and Golgi. Interacts with protein prM. Interacts with non-structural protein 1. In terms of assembly, homodimer; Homohexamer when secreted. Interacts with envelope protein E. NS1 interacts with NS4B. Interacts with host complement protein CFH; this interaction leads to the degradation of C3. As to quaternary structure, interacts (via N-terminus) with serine protease NS3. Forms a heterodimer with serine protease NS3. May form homooligomers. In terms of assembly, forms a heterodimer with NS2B. Interacts with non-structural protein 2A (via N-terminus). Interacts with NS4B. Interacts with unphosphorylated RNA-directed RNA polymerase NS5; this interaction stimulates RNA-directed RNA polymerase NS5 guanylyltransferase activity. As to quaternary structure, interacts with serine protease NS3. Homodimer. Interacts with host STAT2; this interaction inhibits the phosphorylation of the latter, and, when all viral proteins are present (polyprotein), targets STAT2 for degradation. Interacts with serine protease NS3. Post-translationally, specific enzymatic cleavages in vivo yield mature proteins. Cleavages in the lumen of endoplasmic reticulum are performed by host signal peptidase, whereas cleavages in the cytoplasmic side are performed by serine protease NS3. Signal cleavage at the 2K-4B site requires a prior NS3 protease-mediated cleavage at the 4A-2K site. Cleaved in post-Golgi vesicles by a host furin, releasing the mature small envelope protein M, and peptide pr. This cleavage is incomplete as up to 30% of viral particles still carry uncleaved prM. In terms of processing, N-glycosylated. Post-translationally, N-glycosylated. The excreted form is glycosylated and this is required for efficient secretion of the protein from infected cells. Acetylated by host KAT5. Acetylation modulates NS3 RNA-binding and unwinding activities and plays an important positive role for viral replication. In terms of processing, phosphorylated on serines residues. This phosphorylation may trigger NS5 nuclear localization.

It is found in the virion. Its subcellular location is the host nucleus. The protein localises to the host cytoplasm. It localises to the host perinuclear region. The protein resides in the secreted. It is found in the virion membrane. Its subcellular location is the host endoplasmic reticulum membrane. The catalysed reaction is Selective hydrolysis of -Xaa-Xaa-|-Yaa- bonds in which each of the Xaa can be either Arg or Lys and Yaa can be either Ser or Ala.. It catalyses the reaction RNA(n) + a ribonucleoside 5'-triphosphate = RNA(n+1) + diphosphate. The enzyme catalyses a ribonucleoside 5'-triphosphate + H2O = a ribonucleoside 5'-diphosphate + phosphate + H(+). It carries out the reaction ATP + H2O = ADP + phosphate + H(+). The catalysed reaction is a 5'-end (5'-triphosphoguanosine)-ribonucleoside in mRNA + S-adenosyl-L-methionine = a 5'-end (N(7)-methyl 5'-triphosphoguanosine)-ribonucleoside in mRNA + S-adenosyl-L-homocysteine. It catalyses the reaction a 5'-end (N(7)-methyl 5'-triphosphoguanosine)-ribonucleoside in mRNA + S-adenosyl-L-methionine = a 5'-end (N(7)-methyl 5'-triphosphoguanosine)-(2'-O-methyl-ribonucleoside) in mRNA + S-adenosyl-L-homocysteine + H(+). Its function is as follows. Plays a role in virus budding by binding to the cell membrane and gathering the viral RNA into a nucleocapsid that forms the core of a mature virus particle. During virus entry, may induce genome penetration into the host cytoplasm after hemifusion induced by the surface proteins. Can migrate to the cell nucleus where it modulates host functions. Overcomes the anti-viral effects of host EXOC1 by sequestering and degrading the latter through the proteasome degradation pathway. Functionally, inhibits RNA silencing by interfering with host Dicer. In terms of biological role, prevents premature fusion activity of envelope proteins in trans-Golgi by binding to envelope protein E at pH6.0. After virion release in extracellular space, gets dissociated from E dimers. Acts as a chaperone for envelope protein E during intracellular virion assembly by masking and inactivating envelope protein E fusion peptide. prM is the only viral peptide matured by host furin in the trans-Golgi network probably to avoid catastrophic activation of the viral fusion activity in acidic Golgi compartment prior to virion release. prM-E cleavage is inefficient, and many virions are only partially matured. These uncleaved prM would play a role in immune evasion. Its function is as follows. May play a role in virus budding. Exerts cytotoxic effects by activating a mitochondrial apoptotic pathway through M ectodomain. May display a viroporin activity. Functionally, binds to host cell surface receptor and mediates fusion between viral and cellular membranes. Envelope protein is synthesized in the endoplasmic reticulum in the form of heterodimer with protein prM. They play a role in virion budding in the ER, and the newly formed immature particle is covered with 60 spikes composed of heterodimer between precursor prM and envelope protein E. The virion is transported to the Golgi apparatus where the low pH causes dissociation of PrM-E heterodimers and formation of E homodimers. prM-E cleavage is inefficient, and many virions are only partially matured. These uncleaved prM would play a role in immune evasion. In terms of biological role, involved in immune evasion, pathogenesis and viral replication. Once cleaved off the polyprotein, is targeted to three destinations: the viral replication cycle, the plasma membrane and the extracellular compartment. Essential for viral replication. Required for formation of the replication complex and recruitment of other non-structural proteins to the ER-derived membrane structures. Excreted as a hexameric lipoparticle that plays a role against host immune response. Antagonizing the complement function. Binds to the host macrophages and dendritic cells. Inhibits signal transduction originating from Toll-like receptor 3 (TLR3). Component of the viral RNA replication complex that functions in virion assembly and antagonizes the host alpha/beta interferon antiviral response. Its function is as follows. Required cofactor for the serine protease function of NS3. May have membrane-destabilizing activity and form viroporins. Functionally, displays three enzymatic activities: serine protease, NTPase and RNA helicase. NS3 serine protease, in association with NS2B, performs its autocleavage and cleaves the polyprotein at dibasic sites in the cytoplasm: C-prM, NS2A-NS2B, NS2B-NS3, NS3-NS4A, NS4A-2K and NS4B-NS5. NS3 RNA helicase binds RNA and unwinds dsRNA in the 3' to 5' direction. In terms of biological role, regulates the ATPase activity of the NS3 helicase activity. NS4A allows NS3 helicase to conserve energy during unwinding. Functions as a signal peptide for NS4B and is required for the interferon antagonism activity of the latter. Its function is as follows. Induces the formation of ER-derived membrane vesicles where the viral replication takes place. Inhibits interferon (IFN)-induced host STAT1 phosphorylation and nuclear translocation, thereby preventing the establishment of cellular antiviral state by blocking the IFN-alpha/beta pathway. Inhibits STAT2 translocation in the nucleus after IFN-alpha treatment. Functionally, replicates the viral (+) and (-) RNA genome, and performs the capping of genomes in the cytoplasm. NS5 methylates viral RNA cap at guanine N-7 and ribose 2'-O positions. Besides its role in RNA genome replication, also prevents the establishment of cellular antiviral state by blocking the interferon-alpha/beta (IFN-alpha/beta) signaling pathway. Inhibits host TYK2 and STAT2 phosphorylation, thereby preventing activation of JAK-STAT signaling pathway. This Culex annulirostris (Common banded mosquito) protein is Genome polyprotein.